A 125-amino-acid chain; its full sequence is Glycine cleavage system H protein (125 aa).

One can recognise a Lipoyl-binding domain in the interval 19–101 (IATIGITDYA…MGDGWFIKLR (83 aa)). The residue at position 60 (lysine 60) is an N6-lipoyllysine.

The protein belongs to the GcvH family. As to quaternary structure, the glycine cleavage system is composed of four proteins: P, T, L and H. (R)-lipoate serves as cofactor.

Its function is as follows. The glycine cleavage system catalyzes the degradation of glycine. The H protein shuttles the methylamine group of glycine from the P protein to the T protein. This chain is Glycine cleavage system H protein, found in Parvibaculum lavamentivorans (strain DS-1 / DSM 13023 / NCIMB 13966).